Here is a 224-residue protein sequence, read N- to C-terminus: Ribonuclease T (224 aa).

An Exonuclease domain is found at 32 to 206; that stretch reads VVVDVETGGF…YDTEKTAELF (175 aa). The Mg(2+) site is built by D35, E37, H193, and D198. H193 acts as the Proton donor/acceptor in catalysis.

Belongs to the RNase T family. Homodimer. Requires Mg(2+) as cofactor.

Its function is as follows. Trims short 3' overhangs of a variety of RNA species, leaving a one or two nucleotide 3' overhang. Responsible for the end-turnover of tRNA: specifically removes the terminal AMP residue from uncharged tRNA (tRNA-C-C-A). Also appears to be involved in tRNA biosynthesis. The chain is Ribonuclease T from Pseudomonas paraeruginosa (strain DSM 24068 / PA7) (Pseudomonas aeruginosa (strain PA7)).